We begin with the raw amino-acid sequence, 423 residues long: Serine--tRNA ligase (423 aa).

231 to 233 (TAE) lines the L-serine pocket. 262 to 264 (RSE) contributes to the ATP binding site. Glutamate 285 lines the L-serine pocket. ATP is bound at residue 349-352 (EISS). Serine 384 serves as a coordination point for L-serine.

It belongs to the class-II aminoacyl-tRNA synthetase family. Type-1 seryl-tRNA synthetase subfamily. Homodimer. The tRNA molecule binds across the dimer.

It localises to the cytoplasm. The enzyme catalyses tRNA(Ser) + L-serine + ATP = L-seryl-tRNA(Ser) + AMP + diphosphate + H(+). It catalyses the reaction tRNA(Sec) + L-serine + ATP = L-seryl-tRNA(Sec) + AMP + diphosphate + H(+). It participates in aminoacyl-tRNA biosynthesis; selenocysteinyl-tRNA(Sec) biosynthesis; L-seryl-tRNA(Sec) from L-serine and tRNA(Sec): step 1/1. Its function is as follows. Catalyzes the attachment of serine to tRNA(Ser). Is also able to aminoacylate tRNA(Sec) with serine, to form the misacylated tRNA L-seryl-tRNA(Sec), which will be further converted into selenocysteinyl-tRNA(Sec). In Lactococcus lactis subsp. cremoris (strain SK11), this protein is Serine--tRNA ligase.